Here is a 211-residue protein sequence, read N- to C-terminus: ATP phosphoribosyltransferase (211 aa).

The protein belongs to the ATP phosphoribosyltransferase family. Short subfamily. In terms of assembly, heteromultimer composed of HisG and HisZ subunits.

The protein resides in the cytoplasm. It catalyses the reaction 1-(5-phospho-beta-D-ribosyl)-ATP + diphosphate = 5-phospho-alpha-D-ribose 1-diphosphate + ATP. It functions in the pathway amino-acid biosynthesis; L-histidine biosynthesis; L-histidine from 5-phospho-alpha-D-ribose 1-diphosphate: step 1/9. Its function is as follows. Catalyzes the condensation of ATP and 5-phosphoribose 1-diphosphate to form N'-(5'-phosphoribosyl)-ATP (PR-ATP). Has a crucial role in the pathway because the rate of histidine biosynthesis seems to be controlled primarily by regulation of HisG enzymatic activity. This chain is ATP phosphoribosyltransferase, found in Ectopseudomonas mendocina (strain ymp) (Pseudomonas mendocina).